Reading from the N-terminus, the 127-residue chain is Small ribosomal subunit protein eS8 (127 aa).

The interval 1–25 is disordered; the sequence is MTIFQGKSGKKPTGGNLKQAKKKRR.

This sequence belongs to the eukaryotic ribosomal protein eS8 family. As to quaternary structure, part of the 30S ribosomal subunit.

In Thermoplasma volcanium (strain ATCC 51530 / DSM 4299 / JCM 9571 / NBRC 15438 / GSS1), this protein is Small ribosomal subunit protein eS8.